The primary structure comprises 594 residues: UvrABC system protein C (594 aa).

The region spanning Ser13–Ile99 is the GIY-YIG domain. Positions Asp205–Ile240 constitute a UVR domain.

The protein belongs to the UvrC family. Interacts with UvrB in an incision complex.

The protein resides in the cytoplasm. Its function is as follows. The UvrABC repair system catalyzes the recognition and processing of DNA lesions. UvrC both incises the 5' and 3' sides of the lesion. The N-terminal half is responsible for the 3' incision and the C-terminal half is responsible for the 5' incision. This is UvrABC system protein C from Helicobacter pylori (strain J99 / ATCC 700824) (Campylobacter pylori J99).